The following is a 296-amino-acid chain: Putative S-adenosyl-L-methionine-dependent methyltransferase MAV_4764 (296 aa).

S-adenosyl-L-methionine contacts are provided by residues D121 and 150–151; that span reads DL.

This sequence belongs to the UPF0677 family.

Exhibits S-adenosyl-L-methionine-dependent methyltransferase activity. The chain is Putative S-adenosyl-L-methionine-dependent methyltransferase MAV_4764 from Mycobacterium avium (strain 104).